Here is a 168-residue protein sequence, read N- to C-terminus: Small ribosomal subunit protein uS5 (168 aa).

The 64-residue stretch at 17–80 folds into the S5 DRBM domain; that stretch reads IEDQLVAVNR…EDGKKKMINV (64 aa).

The protein belongs to the universal ribosomal protein uS5 family. Part of the 30S ribosomal subunit. Contacts proteins S4 and S8.

With S4 and S12 plays an important role in translational accuracy. Its function is as follows. Located at the back of the 30S subunit body where it stabilizes the conformation of the head with respect to the body. The chain is Small ribosomal subunit protein uS5 from Lactobacillus helveticus (strain DPC 4571).